Here is a 429-residue protein sequence, read N- to C-terminus: Putative protease Do-like 14 (429 aa).

Residues 87–113 are disordered; the sequence is KSEAPINDEKGVSVEASDSSSKPSNGY. The serine protease stretch occupies residues 113–338; that stretch reads YLGRDTIANA…IRPWIGLKMV (226 aa). Residues His165, Asp203, and Ser281 each act as charge relay system in the active site. The PDZ domain maps to 318-424; sequence IIEHFKKSGR…RVTLEVIPEE (107 aa).

This sequence belongs to the peptidase S1C family.

Putative serine protease. In Arabidopsis thaliana (Mouse-ear cress), this protein is Putative protease Do-like 14 (DEGP14).